We begin with the raw amino-acid sequence, 360 residues long: DNA replication and repair protein RecF (360 aa).

Gly-33 to Thr-40 lines the ATP pocket.

Belongs to the RecF family.

The protein localises to the cytoplasm. Its function is as follows. The RecF protein is involved in DNA metabolism; it is required for DNA replication and normal SOS inducibility. RecF binds preferentially to single-stranded, linear DNA. It also seems to bind ATP. The chain is DNA replication and repair protein RecF from Rickettsia massiliae (strain Mtu5).